Here is a 219-residue protein sequence, read N- to C-terminus: Uracil-DNA glycosylase (219 aa).

D59 functions as the Proton acceptor in the catalytic mechanism.

The protein belongs to the uracil-DNA glycosylase (UDG) superfamily. UNG family.

It is found in the cytoplasm. The enzyme catalyses Hydrolyzes single-stranded DNA or mismatched double-stranded DNA and polynucleotides, releasing free uracil.. Its function is as follows. Excises uracil residues from the DNA which can arise as a result of misincorporation of dUMP residues by DNA polymerase or due to deamination of cytosine. This Macrococcus caseolyticus (strain JCSC5402) (Macrococcoides caseolyticum) protein is Uracil-DNA glycosylase.